A 346-amino-acid chain; its full sequence is D-alanine--D-alanine ligase (346 aa).

The 201-residue stretch at 125-325 (KRIWRSEGLP…YPALCLEVLR (201 aa)) folds into the ATP-grasp domain. 151-206 (FAALGSPMIVKPDREGSTIGLTKVTQIEQCGAAYALAARHDAMVLCEQFVKGDEVT) provides a ligand contact to ATP. Mg(2+) contacts are provided by aspartate 278, glutamate 292, and asparagine 294.

Belongs to the D-alanine--D-alanine ligase family. Requires Mg(2+) as cofactor. Mn(2+) serves as cofactor.

Its subcellular location is the cytoplasm. The catalysed reaction is 2 D-alanine + ATP = D-alanyl-D-alanine + ADP + phosphate + H(+). It participates in cell wall biogenesis; peptidoglycan biosynthesis. Functionally, cell wall formation. This Albidiferax ferrireducens (strain ATCC BAA-621 / DSM 15236 / T118) (Rhodoferax ferrireducens) protein is D-alanine--D-alanine ligase.